We begin with the raw amino-acid sequence, 365 residues long: Chloroplast protein FOR GROWTH AND FERTILITY 1 (365 aa).

Disordered stretches follow at residues 1 to 30 and 62 to 90; these read MERLLQPSSSSSSISPSKFPSRTSPFLPRL and YTPIGSNTTNNSFNGSPKSDESKPNPGFL. Residues 1-79 constitute a chloroplast transit peptide; that stretch reads MERLLQPSSS…TNNSFNGSPK (79 aa). Composition is skewed to low complexity over residues 7 to 24 and 62 to 77; these read PSSSSSSISPSKFPSRTS and YTPIGSNTTNNSFNGS. 7 helical membrane-spanning segments follow: residues 109–129, 139–159, 182–202, 218–238, 274–294, 301–321, and 345–365; these read VILISAVAVLLLNPLLAPPAF, GWLTSAWTGFLAGCLHTLSGP, ALWGCGHDAGQVIFGLLFLLL, IVGLTLVIIGAMGIKEASEIP, GVVHGLQPDALMIVLPALALP, AFLIMFLVGTVIAMGSYTAFI, and LVAIGLGLGIVISPFFGFSLY.

Mostly expressed in leaves and flowers, to a lower extent, in stems, roots, floral bud, inflorescence and siliques, and, barely, in seedlings.

It localises to the plastid. The protein localises to the chloroplast membrane. It is found in the plastid membrane. Together with CGF2, essential protein which supports female gametogenesis and embryogenesis, probably by securing local energy supply. The sequence is that of Chloroplast protein FOR GROWTH AND FERTILITY 1 from Arabidopsis thaliana (Mouse-ear cress).